The following is a 306-amino-acid chain: Mitochondrial substrate carrier family protein M (306 aa).

Topologically, residues 1–10 (MRYILNNNVE) are mitochondrial intermembrane. Solcar repeat units follow at residues 5 to 98 (LNNN…YKNI), 108 to 195 (LNTF…IKFY), and 207 to 299 (LNAS…IKKS). The helical transmembrane segment at 11–31 (GTSALLGSTVATAFLQPFDFL) threads the bilayer. Topologically, residues 32–72 (KIRLQGSGFASGGDLNKFKRVGVIDTCKNVLKNEGIKQFWR) are mitochondrial matrix. Residues 73 to 89 (GSSPTIVASGIAWGTYM) traverse the membrane as a helical segment. At 90–113 (HFYEAYKNILKSKYNVTQLNTFDH) the chain is on the mitochondrial intermembrane side. The helical transmembrane segment at 114-134 (FICAVGASATQVFITNPIFLI) threads the bilayer. The Mitochondrial matrix portion of the chain corresponds to 135–163 (KTRMQLQTPGSANYYTGIFDGIKKTVKVE). A helical membrane pass occupies residues 164–184 (GFKGLYKGVIPSLWLTFHGGI). Topologically, residues 185–211 (QMSSYEHIKFYFSSNSGKSLDSLNASE) are mitochondrial intermembrane. A helical membrane pass occupies residues 212 to 232 (IFIASSISKFLASTILYPFQV). The Mitochondrial matrix portion of the chain corresponds to 233–278 (VKTRLQDERNIPNQNNVRVYNGTKDVIFKILKNEGIIGFYRGLVPN). Residues 279-296 (TLKVIPNTSITLLLYEEI) form a helical membrane-spanning segment. The Mitochondrial intermembrane portion of the chain corresponds to 297-306 (KKSFNYIINE).

The protein belongs to the mitochondrial carrier (TC 2.A.29) family.

It is found in the mitochondrion inner membrane. Mitochondrial solute carriers shuttle metabolites, nucleotides, and cofactors through the mitochondrial inner membrane. Transports folate across the inner membranes of mitochondria. This Dictyostelium discoideum (Social amoeba) protein is Mitochondrial substrate carrier family protein M (mcfM).